The chain runs to 276 residues: Melibiose/raffinose/stachyose import permease protein MelC (276 aa).

6 helical membrane-spanning segments follow: residues 11–31 (IITLLAAIVACAHFIPFYILL), 74–94 (IITGFSALLLIIFGSLAAYPL), 104–124 (AVFALLISIMIIPPLTSMVPL), 139–159 (IAIFINTAAYMPLTVFLYSGF), 186–206 (IVFPLLKPITATICIISCVFI), and 240–260 (LHLVAAAALMAMLPMVVLFLA). The ABC transmembrane type-1 domain maps to 69 to 261 (FINTMIITGF…LPMVVLFLAL (193 aa)).

Belongs to the binding-protein-dependent transport system permease family. In terms of assembly, the complex is composed of two ATP-binding proteins (MsmX), two transmembrane proteins (MelC and MelD) and a solute-binding protein (MelE).

It is found in the cell membrane. Functionally, part of the ABC transporter complex MelEDC-MsmX involved in melibiose, raffinose and stachyose import. Probably responsible for the translocation of the substrate across the membrane. The polypeptide is Melibiose/raffinose/stachyose import permease protein MelC (Bacillus subtilis (strain 168)).